Consider the following 177-residue polypeptide: ATP synthase subunit b (177 aa).

Residues 29–49 (FFFVLAIFLIVLAVIGTFVVP) traverse the membrane as a helical segment.

This sequence belongs to the ATPase B chain family. As to quaternary structure, F-type ATPases have 2 components, F(1) - the catalytic core - and F(0) - the membrane proton channel. F(1) has five subunits: alpha(3), beta(3), gamma(1), delta(1), epsilon(1). F(0) has three main subunits: a(1), b(2) and c(10-14). The alpha and beta chains form an alternating ring which encloses part of the gamma chain. F(1) is attached to F(0) by a central stalk formed by the gamma and epsilon chains, while a peripheral stalk is formed by the delta and b chains.

Its subcellular location is the cell membrane. In terms of biological role, f(1)F(0) ATP synthase produces ATP from ADP in the presence of a proton or sodium gradient. F-type ATPases consist of two structural domains, F(1) containing the extramembraneous catalytic core and F(0) containing the membrane proton channel, linked together by a central stalk and a peripheral stalk. During catalysis, ATP synthesis in the catalytic domain of F(1) is coupled via a rotary mechanism of the central stalk subunits to proton translocation. Functionally, component of the F(0) channel, it forms part of the peripheral stalk, linking F(1) to F(0). The chain is ATP synthase subunit b from Mycolicibacterium paratuberculosis (strain ATCC BAA-968 / K-10) (Mycobacterium paratuberculosis).